A 307-amino-acid chain; its full sequence is 4-hydroxy-tetrahydrodipicolinate synthase (307 aa).

Position 49 (Thr-49) interacts with pyruvate. Tyr-138 serves as the catalytic Proton donor/acceptor. Lys-166 serves as the catalytic Schiff-base intermediate with substrate. Residue Ile-207 coordinates pyruvate.

It belongs to the DapA family. As to quaternary structure, homotetramer; dimer of dimers.

The protein resides in the cytoplasm. It catalyses the reaction L-aspartate 4-semialdehyde + pyruvate = (2S,4S)-4-hydroxy-2,3,4,5-tetrahydrodipicolinate + H2O + H(+). It participates in amino-acid biosynthesis; L-lysine biosynthesis via DAP pathway; (S)-tetrahydrodipicolinate from L-aspartate: step 3/4. In terms of biological role, catalyzes the condensation of (S)-aspartate-beta-semialdehyde [(S)-ASA] and pyruvate to 4-hydroxy-tetrahydrodipicolinate (HTPA). In Limosilactobacillus reuteri (strain DSM 20016) (Lactobacillus reuteri), this protein is 4-hydroxy-tetrahydrodipicolinate synthase.